The following is a 187-amino-acid chain: Homeobox protein engrailed-like ceh-16 (187 aa).

Disordered stretches follow at residues 14-43 (PYPC…NGTP), 60-100 (SDRP…DQLD), and 144-167 (KSTS…HPSI). Residues 20 to 39 (PTISTPATSPSSISPTFASP) are compositionally biased toward low complexity. The segment at residues 87 to 146 (EKRPRTAFTGDQLDRLKTEFRESRYLTEKRRQELAHELGLNESQIKIWFQNKRAKLKKST) is a DNA-binding region (homeobox). Over residues 145–163 (STSSVPRDRCSSVTPNPHN) the composition is skewed to polar residues.

This sequence belongs to the engrailed homeobox family. In terms of tissue distribution, expressed in seam cells.

The protein localises to the nucleus. Its subcellular location is the cytoplasm. Its function is as follows. Transcriptional regulator which binds to DNA to regulate gene expression and promote seam cell development and differentiation during embryogenesis. Plays a role in maintaining the boundaries between the lateral rows of seam cells and the ventral and dorsal row of epidermal cells during embryonic development. Negatively regulates the expression of the fusion effector protein eff-1 to prevent seam cell fusion with the dorsal and ventral epidermal cells during embryonic elongation. Positively regulates seam cell self-renewal and expansion during the L2 larval stage to promote seam cell development. This role does not seem to be via regulation of eff-1 expression. Specifically, it is required for the asymmetric division of the V5.p seam cell during the L2 larval stage, and in turn the asymmetric nuclear distribution of pop-1 in V5.p daughter cells. The chain is Homeobox protein engrailed-like ceh-16 from Caenorhabditis elegans.